A 91-amino-acid polypeptide reads, in one-letter code: Protein YchS (91 aa).

The sequence is that of Protein YchS (ychS) from Escherichia coli O157:H7.